Consider the following 398-residue polypeptide: Selection and upkeep of intraepithelial T-cells protein 8 (398 aa).

The N-terminal stretch at methionine 1–serine 25 is a signal peptide. The Ig-like V-type domain occupies glutamate 26 to threonine 141. The Extracellular segment spans residues glutamate 26–leucine 244. Cysteine 49 and cysteine 123 are joined by a disulfide. Residues asparagine 92 and asparagine 139 are each glycosylated (N-linked (GlcNAc...) asparagine). The region spanning alanine 142–isoleucine 233 is the Ig-like C1-type domain. Cysteine 163 and cysteine 217 are oxidised to a cystine. A helical membrane pass occupies residues tryptophan 245 to isoleucine 265. The Cytoplasmic portion of the chain corresponds to asparagine 266–serine 288. Residues tryptophan 289–proline 309 traverse the membrane as a helical segment. The Extracellular segment spans residues histidine 310–leucine 331. Residues leucine 332 to isoleucine 352 form a helical membrane-spanning segment. Over lysine 353–lysine 398 the chain is Cytoplasmic.

This sequence belongs to the SKINT family. In terms of tissue distribution, expressed in skin, thymus, testis and, to a lower extent, bladder, brain, heart, kidney, mammary gland, small intestine and uterus.

The protein resides in the membrane. Its function is as follows. May act by engaging a cell surface molecule on immature T-cells in the embryonic thymus. In Mus musculus (Mouse), this protein is Selection and upkeep of intraepithelial T-cells protein 8 (Skint8).